A 623-amino-acid polypeptide reads, in one-letter code: Transketolase (623 aa).

The residue at position 1 (Met-1) is an N-acetylmethionine. N6-acetyllysine occurs at positions 6 and 11. His-37 lines the substrate pocket. Residues Ser-40 and His-77 each contribute to the thiamine diphosphate site. The residue at position 104 (Ser-104) is a Phosphoserine. 123–125 (GSL) serves as a coordination point for thiamine diphosphate. Lys-144 carries the N6-acetyllysine modification. A Mg(2+)-binding site is contributed by Asp-155. Gly-156 and Asn-185 together coordinate thiamine diphosphate. 2 residues coordinate Mg(2+): Asn-185 and Leu-187. Lys-204, Lys-232, and Lys-241 each carry N6-acetyllysine. Thiamine diphosphate is bound by residues Lys-244 and His-258. Residue His-258 participates in substrate binding. An N6-acetyllysine modification is found at Lys-260. The residue at position 275 (Tyr-275) is a Phosphotyrosine. Thr-287 is subject to Phosphothreonine. A Phosphoserine modification is found at Ser-295. Arg-318 lines the substrate pocket. A Glycyl lysine isopeptide (Lys-Gly) (interchain with G-Cter in SUMO2) cross-link involves residue Lys-352. Residue Glu-366 is the Proton donor of the active site. Residue Phe-392 coordinates thiamine diphosphate. Substrate contacts are provided by His-416 and Asp-424. Position 428 (Gln-428) interacts with thiamine diphosphate. Arg-474 provides a ligand contact to substrate. N6-acetyllysine occurs at positions 538 and 603.

Belongs to the transketolase family. As to quaternary structure, homodimer. Requires Mg(2+) as cofactor. Ca(2+) serves as cofactor. The cofactor is Mn(2+). Co(2+) is required as a cofactor. It depends on thiamine diphosphate as a cofactor.

It catalyses the reaction D-sedoheptulose 7-phosphate + D-glyceraldehyde 3-phosphate = aldehydo-D-ribose 5-phosphate + D-xylulose 5-phosphate. In terms of biological role, catalyzes the transfer of a two-carbon ketol group from a ketose donor to an aldose acceptor, via a covalent intermediate with the cofactor thiamine pyrophosphate. The polypeptide is Transketolase (TKT) (Pongo abelii (Sumatran orangutan)).